The chain runs to 566 residues: CTP synthase (566 aa).

Residues 1–265 (MTKYVFVTGG…DEIVCHKLNL (265 aa)) form an amidoligase domain region. Residue Ser13 participates in CTP binding. Position 13 (Ser13) interacts with UTP. Residues 14 to 19 (SLGKGI) and Asp71 contribute to the ATP site. Mg(2+)-binding residues include Asp71 and Glu139. CTP is bound by residues 146-148 (DIE), 186-191 (KTKPTQ), and Lys222. UTP contacts are provided by residues 186 to 191 (KTKPTQ) and Lys222. In terms of domain architecture, Glutamine amidotransferase type-1 spans 290–543 (EIALVGKYVD…IEAAAVFADK (254 aa)). Gly351 serves as a coordination point for L-glutamine. Catalysis depends on Cys378, which acts as the Nucleophile; for glutamine hydrolysis. L-glutamine is bound by residues 379-382 (LGMQ), Glu402, and Arg469. Catalysis depends on residues His516 and Glu518. A disordered region spans residues 545-566 (PSSEGAISADKPERTTTGAYIQ).

This sequence belongs to the CTP synthase family. Homotetramer.

The catalysed reaction is UTP + L-glutamine + ATP + H2O = CTP + L-glutamate + ADP + phosphate + 2 H(+). The enzyme catalyses L-glutamine + H2O = L-glutamate + NH4(+). It catalyses the reaction UTP + NH4(+) + ATP = CTP + ADP + phosphate + 2 H(+). It participates in pyrimidine metabolism; CTP biosynthesis via de novo pathway; CTP from UDP: step 2/2. Allosterically activated by GTP, when glutamine is the substrate; GTP has no effect on the reaction when ammonia is the substrate. The allosteric effector GTP functions by stabilizing the protein conformation that binds the tetrahedral intermediate(s) formed during glutamine hydrolysis. Inhibited by the product CTP, via allosteric rather than competitive inhibition. Functionally, catalyzes the ATP-dependent amination of UTP to CTP with either L-glutamine or ammonia as the source of nitrogen. Regulates intracellular CTP levels through interactions with the four ribonucleotide triphosphates. The protein is CTP synthase of Nitrosospira multiformis (strain ATCC 25196 / NCIMB 11849 / C 71).